The sequence spans 333 residues: D-fructose 1,6-bisphosphatase class 2/sedoheptulose 1,7-bisphosphatase (333 aa).

The Mn(2+) site is built by aspartate 33, glutamate 57, aspartate 85, and glutamate 88. Substrate-binding positions include 88–90 (EGT), tyrosine 119, 164–166 (RAR), and 186–188 (DGD). Glutamate 213 lines the Mn(2+) pocket.

It belongs to the FBPase class 2 family. As to quaternary structure, homotetramer. Mn(2+) serves as cofactor.

The catalysed reaction is beta-D-fructose 1,6-bisphosphate + H2O = beta-D-fructose 6-phosphate + phosphate. The enzyme catalyses D-sedoheptulose 1,7-bisphosphate + H2O = D-sedoheptulose 7-phosphate + phosphate. It participates in carbohydrate biosynthesis; Calvin cycle. Functionally, catalyzes the hydrolysis of fructose 1,6-bisphosphate (Fru 1,6-P2) and sedoheptulose 1,7-bisphosphate (Sed 1,7-P2) to fructose 6-phosphate and sedoheptulose 7-phosphate, respectively. In Prochlorococcus marinus (strain MIT 9515), this protein is D-fructose 1,6-bisphosphatase class 2/sedoheptulose 1,7-bisphosphatase.